We begin with the raw amino-acid sequence, 2195 residues long: MGAQVSTQKTGAHETGLNASGSSIIHYTNINYYKDAASNSANRQEFSQDPGKFTEPVKDIMVKSLPALNSPSAEECGYSDRVRSITLGNSTITTQESANVVVGYGRWPEYLKDNEATAEDQPTQPDVATCRFYTLESVTWERDSPGWWWKFPDALKDMGLFGQNMYYHYLGRAGYTLHVQCNASKFHQGCLLVVCVPEAEMGCSQVDGTVNEHGLSEGETAKKFSSTSTNGTNTVQTIVTNAGMGVGVGNLTIYPHQWINLRTNNCATIVMPYINNVPMDNMFRHHNFTLMIIPFVPLDYSSDSSTYVPITVTVAPMCAEYNGLRLSTSLQGLPVMNTPGSNQFLTSDDFQSPSAMPQFDVTPELNIPGEVQNLMEIAEVDSVVPVNNVEGKLDTMEVYRIPVQSGNHQSDQVFGFQVQPGLDSVFKHTLLGEILNYFAHWSGSIKLTFVFCGSAMATGKFLLAYAPPGANAPKNRKDAMLGTHIIWDVGLQSSCVLCVPWISQTHYRLVQQDEYTSAGNVTCWYQTGIVVPAGTPTSCSIMCFVSACNDFSVRLLKDTPFIEQTALLQGDVVEAVENAVARVADTIGSGPSNSQAVPALTAVETGHTSQVTPSDTMQTRHVKNYHSRSESSIENFLSRSACVYMGGYHTTNTDQTKLFASWTISARRMVQMRRKLEIFTYVRFDVEVTFVITSKQDQGSRLGQDMPPLTHQIMYIPPGGPIPKSVTDYAWQTSTNPSIFWTEGNAPPRMSIPFISIGNAYSNFYDGWSHFSQNGVYGYNTLNHMGQIYVRHVNGSSPLPMTSTVRMYFKPKHVKAWVPRPPRLCQYKNASTVNFTPTNVTDKRTSINYIPETVKPDLSNYGAFGYQSGAVYVVNYRVVNRHLATHTDWQNCVWEDYNRDLLISTTTAHGCDVIARCRCSTGVYYCQSKGKHYPVNFEGPGLVEVQESEYYPKRYQSHVLLAAGFSEPGDCGGILRCEHGVIGIVTMGGEGVVGFADVRDLLWLEDDAMEQGVKDYVEQLGNAFGSGFTNQICEQVNLLKESLVGQDSILEKSLKALVKIISALVIVVRNHDDLITVTATLALIGCTSSPWRWLKQKVSQYYGIPMAERQNNGWLKKFTEMTNSCKGMEWISIKIQKFIEWLKVKILPEVREKHEFLNRLKQLPLLESQIATIEQSAPSQSDQEQLFSNVQYFAHYCRKYAPLYASEAKRVFSLEKKMSNYIQFKSKCRIEPVCLLLHGSPGAGKSVATNLIGRSLAEKLNSSVYTLPPDPDHFDGYKQQAVVIVDDLCQNPDGKDVSLFCQMVSSVDFVPPMAALEEKGILFTSLFVLASTNAGSINAPTVSDSRALARRFHFDMNIEVISMYSQNGKINMPMSEKTCDEECCPVNFKRCCPLVCGKAIQFIDRRTQVRYSLDMLVTEMFREYNHRHSVGATLEALFQGPPIYREIKISVAPETPPPPAIADLLKSVDSEAVREYCKEKGWLVPEVNSTLQIEKHVSRAFICLQALTTFVSVAGIIYIIYKLFAGFQGAYTGMPNQKPKVPTLRQAKVQGPAFEFAVAMMKRNSSTVKTEYREFTMLGIYDRWAVLPRHAKPGPTILMNNQEVGVLDAKELVDKDGTNLELTLLKLNRNEKFRDIRGFLAKEEVEANQAVLAINTSKFPNMYIPVGQVTDYGFLNLGGTPTKRMLMSNFPTRAGQCGGVLMSTGKVLGIHVGGNGHQGFSAALLKHYFNDEQGEIEFIESSKDAGFPIINTPSKTKLEPSVFHQVFEGDKEPAVLRNGDPRLKANFEEAIFSKYIGNVNTHVDEYMLEAVDHYAGQLATLDISTEPMRLEDAVYGTEGLEALDLTTSAGYPYVALGIKKRDILSRRTRDLTKLKECMDKYGLNLPMVTYVKDELRSADKVAKGKSRLIEASSLNDSVAMRQTFGNLYRTFHLNPGIVTGSAVGCDPDLFWSKIPVMLDGHLIAFDYSGYDASLSPVWFACLKLLLEKLGYTHKETNYIDYLCNSHHLYRDKHYFERGGMPSGYSGTSMFNSMINNIIIRTLMLKVYKGIDLDQFRMIAYGDDVIASYPWPIDASLLAETGKGYGLIMTPADKGECFNEVTWTNVTFLKRYFRADEQYPFLVHPVMPMKDIHESIRWTKDPKNTQDHVRSLCLLAWHNGEHEYEEFIRKIRSVPVGRCLTLPAFSTLRRKWLDSF.

Residue G2 is the site of N-myristoyl glycine; by host attachment. Topologically, residues 2 to 1505 are cytoplasmic; that stretch reads GAQVSTQKTG…HVSRAFICLQ (1504 aa). The amphipathic alpha-helix stretch occupies residues 567–583; it reads LLQGDVVEAVENAVARV. Residues H882 and D900 each act as for protease 2A activity in the active site. 2 residues coordinate Zn(2+): C917 and C919. C971 acts as the For protease 2A activity in catalysis. Zn(2+) is bound by residues C977 and H979. Residues 1111–1183 form a membrane-binding region; it reads NNGWLKKFTE…EQSAPSQSDQ (73 aa). Residues 1111 to 1249 are oligomerization; the sequence is NNGWLKKFTE…SPGAGKSVAT (139 aa). An RNA-binding region spans residues 1132 to 1136; it reads SIKIQ. The SF3 helicase domain maps to 1215-1371; that stretch reads EKKMSNYIQF…SMYSQNGKIN (157 aa). Zn(2+)-binding residues include C1379, C1391, and C1396. A C4-type; degenerate zinc finger spans residues 1379–1396; sequence CDEECCPVNFKRCCPLVC. An RNA-binding region spans residues 1423 to 1430; that stretch reads EYNHRHSV. An oligomerization region spans residues 1434–1439; the sequence is LEALFQ. An intramembrane segment occupies 1506–1521; that stretch reads ALTTFVSVAGIIYIIY. Topologically, residues 1522–2195 are cytoplasmic; that stretch reads KLFAGFQGAY…TLRRKWLDSF (674 aa). Residue Y1531 is modified to O-(5'-phospho-RNA)-tyrosine. A Peptidase C3 domain is found at 1551–1729; it reads GPAFEFAVAM…FSAALLKHYF (179 aa). Catalysis depends on for protease 3C activity residues H1590, E1621, and C1697. Residues 1960–2076 form the RdRp catalytic domain; that stretch reads GHLIAFDYSG…SYPWPIDASL (117 aa). Residues D1966 and D2062 each contribute to the Mg(2+) site.

The protein belongs to the picornaviruses polyprotein family. In terms of assembly, interacts with capsid protein VP1 and capsid protein VP3 to form heterotrimeric protomers. Interacts with capsid protein VP0, and capsid protein VP3 to form heterotrimeric protomers. Five protomers subsequently associate to form pentamers which serve as building blocks for the capsid. Interacts with capsid protein VP2, capsid protein VP3 and capsid protein VP4 following cleavage of capsid protein VP0. As to quaternary structure, interacts with capsid protein VP1 and capsid protein VP3 in the mature capsid. In terms of assembly, interacts with capsid protein VP0 and capsid protein VP1 to form heterotrimeric protomers. Five protomers subsequently associate to form pentamers which serve as building blocks for the capsid. Interacts with capsid protein VP4 in the mature capsid. Interacts with protein 2C; this interaction may be important for virion morphogenesis. Interacts with capsid protein VP1 and capsid protein VP3. As to quaternary structure, homodimer. In terms of assembly, homohexamer; forms a hexameric ring structure with 6-fold symmetry characteristic of AAA+ ATPases. Interacts (via N-terminus) with host RTN3 (via reticulon domain); this interaction is important for viral replication. Interacts with capsid protein VP3; this interaction may be important for virion morphogenesis. Interacts with protein 3CD. As to quaternary structure, homodimer. Interacts with host GBF1. Interacts (via GOLD domain) with host ACBD3 (via GOLD domain); this interaction allows the formation of a viral protein 3A/ACBD3 heterotetramer with a 2:2 stoichiometry, which will stimulate the recruitment of host PI4KB in order to synthesize PI4P at the viral RNA replication sites. In terms of assembly, interacts with RNA-directed RNA polymerase. Interacts with protein 3AB and with RNA-directed RNA polymerase. As to quaternary structure, interacts with Viral protein genome-linked and with protein 3CD. Mg(2+) serves as cofactor. Post-translationally, specific enzymatic cleavages in vivo by the viral proteases yield processing intermediates and the mature proteins. Myristoylation is required for the formation of pentamers during virus assembly. Further assembly of 12 pentamers and a molecule of genomic RNA generates the provirion. In terms of processing, during virion maturation, immature virions are rendered infectious following cleavage of VP0 into VP4 and VP2. This maturation seems to be an autocatalytic event triggered by the presence of RNA in the capsid and it is followed by a conformational change infectious virion. Post-translationally, myristoylation is required during RNA encapsidation and formation of the mature virus particle. VPg is uridylylated by the polymerase into VPg-pUpU. This acts as a nucleotide-peptide primer for the genomic RNA replication.

It is found in the virion. It localises to the host cytoplasm. Its subcellular location is the host cytoplasmic vesicle membrane. The protein localises to the host nucleus. The enzyme catalyses a ribonucleoside 5'-triphosphate + H2O = a ribonucleoside 5'-diphosphate + phosphate + H(+). It carries out the reaction Selective cleavage of Tyr-|-Gly bond in the picornavirus polyprotein.. The catalysed reaction is RNA(n) + a ribonucleoside 5'-triphosphate = RNA(n+1) + diphosphate. It catalyses the reaction Selective cleavage of Gln-|-Gly bond in the poliovirus polyprotein. In other picornavirus reactions Glu may be substituted for Gln, and Ser or Thr for Gly.. Its activity is regulated as follows. Replication or transcription is subject to high level of random mutations by the nucleotide analog ribavirin. Its function is as follows. Forms an icosahedral capsid of pseudo T=3 symmetry with capsid proteins VP2 and VP3. The capsid is 300 Angstroms in diameter, composed of 60 copies of each capsid protein and enclosing the viral positive strand RNA genome. Capsid protein VP1 mainly forms the vertices of the capsid. Capsid protein VP1 interacts with host cell receptor to provide virion attachment to target host cells. This attachment induces virion internalization. Tyrosine kinases are probably involved in the entry process. After binding to its receptor, the capsid undergoes conformational changes. Capsid protein VP1 N-terminus (that contains an amphipathic alpha-helix) and capsid protein VP4 are externalized. Together, they shape a pore in the host membrane through which viral genome is translocated to host cell cytoplasm. Functionally, forms an icosahedral capsid of pseudo T=3 symmetry with capsid proteins VP2 and VP3. The capsid is 300 Angstroms in diameter, composed of 60 copies of each capsid protein and enclosing the viral positive strand RNA genome. Lies on the inner surface of the capsid shell. After binding to the host receptor, the capsid undergoes conformational changes. Capsid protein VP4 is released, Capsid protein VP1 N-terminus is externalized, and together, they shape a pore in the host membrane through which the viral genome is translocated into the host cell cytoplasm. In terms of biological role, component of immature procapsids, which is cleaved into capsid proteins VP4 and VP2 after maturation. Allows the capsid to remain inactive before the maturation step. Its function is as follows. Cysteine protease that cleaves viral polyprotein and specific host proteins. It is responsible for the autocatalytic cleavage between the P1 and P2 regions, which is the first cleavage occurring in the polyprotein. Also cleaves the host translation initiation factor EIF4G1, in order to shut down the capped cellular mRNA translation. Inhibits the host nucleus-cytoplasm protein and RNA trafficking by cleaving host members of the nuclear pores. Counteracts stress granule formation probably by antagonizing its assembly or promoting its dissassembly. Functionally, plays an essential role in the virus replication cycle by acting as a viroporin. Creates a pore in the host endoplasmic reticulum and as a consequence releases Ca2+ in the cytoplasm of infected cell. In turn, high levels of cytoplasmic calcium may trigger membrane trafficking and transport of viral ER-associated proteins to viroplasms, sites of viral genome replication. Induces and associates with structural rearrangements of intracellular membranes. Displays RNA-binding, nucleotide binding and NTPase activities. May play a role in virion morphogenesis and viral RNA encapsidation by interacting with the capsid protein VP3. In terms of biological role, localizes the viral replication complex to the surface of membranous vesicles. Together with protein 3CD binds the Cis-Active RNA Element (CRE) which is involved in RNA synthesis initiation. Acts as a cofactor to stimulate the activity of 3D polymerase, maybe through a nucleid acid chaperone activity. Its function is as follows. Localizes the viral replication complex to the surface of membranous vesicles. It inhibits host cell endoplasmic reticulum-to-Golgi apparatus transport and causes the disassembly of the Golgi complex, possibly through GBF1 interaction. This would result in depletion of MHC, trail receptors and IFN receptors at the host cell surface. Plays an essential role in viral RNA replication by recruiting ACBD3 and PI4KB at the viral replication sites, thereby allowing the formation of the rearranged membranous structures where viral replication takes place. Functionally, acts as a primer for viral RNA replication and remains covalently bound to viral genomic RNA. VPg is uridylylated prior to priming replication into VPg-pUpU. The oriI viral genomic sequence may act as a template for this. The VPg-pUpU is then used as primer on the genomic RNA poly(A) by the RNA-dependent RNA polymerase to replicate the viral genome. During genome replication, the VPg-RNA linkage is removed by the host TDP2, thereby accelerating replication. During the late stage of the replication cycle, host TDP2 is excluded from sites of viral RNA synthesis and encapsidation, allowing for the generation of progeny virions. Involved in the viral replication complex and viral polypeptide maturation. It exhibits protease activity with a specificity and catalytic efficiency that is different from protease 3C. Protein 3CD lacks polymerase activity. The 3C domain in the context of protein 3CD may have an RNA binding activity. Protein 3CD binds to the 5'UTR of the viral genome. In terms of biological role, replicates the viral genomic RNA on the surface of intracellular membranes. May form linear arrays of subunits that propagate along a strong head-to-tail interaction called interface-I. Covalently attaches UMP to a tyrosine of VPg, which is used to prime RNA synthesis. The positive stranded RNA genome is first replicated at virus induced membranous vesicles, creating a dsRNA genomic replication form. This dsRNA is then used as template to synthesize positive stranded RNA genomes. ss(+)RNA genomes are either translated, replicated or encapsidated. Its function is as follows. Major viral protease that mediates proteolytic processing of the polyprotein. Cleaves host EIF5B, contributing to host translation shutoff. Also cleaves host PABPC1, contributing to host translation shutoff. Cleaves host NLRP1, triggers host N-glycine-mediated degradation of the autoinhibitory NLRP1 N-terminal fragment. The sequence is that of Genome polyprotein from Echovirus 11 (strain Gregory).